Here is a 405-residue protein sequence, read N- to C-terminus: MARAIILMADSLGIGAAPDADKFGDIGANTLAHLLKAYYDETGTALSLPNLSKLGLIDACEAAGKEPCLVSNRSASQGAWGYAKELSSGKDTPSGHWEMAGVPVLFDWGYFPKTQPSFPQEFIDELIARTGIPGILGNCHASGTTILEQLGEEHVKTGKPICYTSADSVFQIAAHEESFGLEKLYQVCETARSLLDEMNIGRVIARPFLGSNNQDFARTSNRRDYSVLPPAPTLLDVLAKDGGEVISIGKISDIYAHQGITQKHKAPGLINLLKKTNELMQSAPDHSLIFTNLVDFDEMFGHRRNPVGYAKALKEFDDYLPTILNALKADDLLIITADHGCDPTFPGSEHTREYVPVIAYQPGMTDIPLGERNSFADIGQTLAQWFNLPALEYGDGFIDKLTTSK.

6 residues coordinate Mn(2+): aspartate 10, aspartate 297, histidine 302, aspartate 338, histidine 339, and histidine 350.

The protein belongs to the phosphopentomutase family. Mn(2+) serves as cofactor.

The protein resides in the cytoplasm. The catalysed reaction is 2-deoxy-alpha-D-ribose 1-phosphate = 2-deoxy-D-ribose 5-phosphate. It carries out the reaction alpha-D-ribose 1-phosphate = D-ribose 5-phosphate. It participates in carbohydrate degradation; 2-deoxy-D-ribose 1-phosphate degradation; D-glyceraldehyde 3-phosphate and acetaldehyde from 2-deoxy-alpha-D-ribose 1-phosphate: step 1/2. Isomerase that catalyzes the conversion of deoxy-ribose 1-phosphate (dRib-1-P) and ribose 1-phosphate (Rib-1-P) to deoxy-ribose 5-phosphate (dRib-5-P) and ribose 5-phosphate (Rib-5-P), respectively. This Pseudoalteromonas translucida (strain TAC 125) protein is Phosphopentomutase.